The chain runs to 574 residues: Putative thiamine pyrophosphate-containing protein YdaP (574 aa).

Positions 28–55 (DSINEFIEELRHERNQLKFIQTRHEEVA) form a coiled coil. Glu52 is a binding site for thiamine diphosphate. FAD is bound by residues 256–277 (IGTK…LGTS) and 294–313 (DSDP…LVCD). The interval 384–464 (TVTVWMARHF…ITVVILNNEN (81 aa)) is thiamine pyrophosphate binding. Mg(2+)-binding residues include Asp435 and Asn462.

Belongs to the TPP enzyme family. It depends on Mg(2+) as a cofactor. Thiamine diphosphate is required as a cofactor.

The protein is Putative thiamine pyrophosphate-containing protein YdaP (ydaP) of Bacillus subtilis (strain 168).